A 177-amino-acid polypeptide reads, in one-letter code: Large ribosomal subunit protein uL6 (177 aa).

It belongs to the universal ribosomal protein uL6 family. Part of the 50S ribosomal subunit.

This protein binds to the 23S rRNA, and is important in its secondary structure. It is located near the subunit interface in the base of the L7/L12 stalk, and near the tRNA binding site of the peptidyltransferase center. The sequence is that of Large ribosomal subunit protein uL6 from Methylocella silvestris (strain DSM 15510 / CIP 108128 / LMG 27833 / NCIMB 13906 / BL2).